The sequence spans 552 residues: MSEAEARPTNFIRQIIDEDLASGKHDHIQTRFPPEPNGYLHIGHAKSICLNFGIARDYQGQCNLRFDDTNPVKEDIEYVESIKRDVEWLGFSWSGDVRYSSDYFDQLHAYAVELIGKGLAYVDELTPEQIREYRGTLTAPGKNSPYRDRTVQENLALFEKMRNGGFAEGTACLRAKIDMASSFIVMRDPVLYRIKFADHHQTGNKWCIYPMYDFTHCISDALEGITHSLCTLEFQDNRRLYDWVLDNISIPCHPRQYEFSRLNLEYAIMSKRKLNQLVVENVVEGWDDPRMPTISGLRRRGYSASSIREFCVRIGVTKQDNNVEMAALESCIRDDLNENAPRAMAVLDPVKVVIENLPAGHEEFVAMPNHPNKPEMGSRQVAFSREVYIDRADFREEANKQYKRLVLGKEVRLRNAYVIKADRIEKDEQGTITTIYCSYDAETLSKDPADGRKVKGVIHWVSAAHAVPAEFRLYDRLFSVANPAAADDFLSTINPDSLKITQGFVEASLVQAEVEKAYQFEREGYFCADRVYSSAEHLVFNRTVGLRDTWVG.

Residues 34 to 44 (PEPNGYLHIGH) carry the 'HIGH' region motif. Residues 35–37 (EPN) and 41–47 (HIGHAKS) contribute to the ATP site. Asp67 and Tyr212 together coordinate L-glutamine. ATP is bound by residues Thr231, 261–262 (RL), and 269–271 (MSK). The short motif at 268–272 (IMSKR) is the 'KMSKS' region element.

Belongs to the class-I aminoacyl-tRNA synthetase family. As to quaternary structure, monomer.

The protein localises to the cytoplasm. It carries out the reaction tRNA(Gln) + L-glutamine + ATP = L-glutaminyl-tRNA(Gln) + AMP + diphosphate. In Pectobacterium atrosepticum (strain SCRI 1043 / ATCC BAA-672) (Erwinia carotovora subsp. atroseptica), this protein is Glutamine--tRNA ligase.